A 452-amino-acid polypeptide reads, in one-letter code: Trigger factor (452 aa).

The PPIase FKBP-type domain maps to 171 to 256 (GDRVTLAFKG…ATLIEAPQDA (86 aa)).

Belongs to the FKBP-type PPIase family. Tig subfamily.

The protein resides in the cytoplasm. The enzyme catalyses [protein]-peptidylproline (omega=180) = [protein]-peptidylproline (omega=0). Functionally, involved in protein export. Acts as a chaperone by maintaining the newly synthesized protein in an open conformation. Functions as a peptidyl-prolyl cis-trans isomerase. In Afipia carboxidovorans (strain ATCC 49405 / DSM 1227 / KCTC 32145 / OM5) (Oligotropha carboxidovorans), this protein is Trigger factor.